Here is a 321-residue protein sequence, read N- to C-terminus: Calcium-binding protein LPS1-alpha (321 aa).

8 EF-hand domains span residues 15–49 (DAIEALKQEFKDNYDTNKDGTVSCAELVKLMNWTE), 47–82 (WTEEMAQNIIARLDVNSDGHMQFDEFILYMEGSTKE), 85–120 (YSSDEIKQMFDDLDKDGNGRISPDELNKGVREIYTK), 121–156 (VVDGMANKLIQEADKDGDGHVNMEEFFDTLVVKLPI), 165–200 (EYREYYKNEFEKFDKNGDGSLTTAEMSEFMSKSTKY), 200–233 (YSDKEIEYLISRVDLNDDGRVQFNEFFMHLDGVS), 232–267 (VSKDHIKQQFMAIDKDKNGKISPEEMVFGITKIYRQ), and 269–304 (VDFEVAKLIKESSFEDDDGYINFNEFVNRFFSNCPY). 39 residues coordinate Ca(2+): D29, N31, D33, T35, E40, D60, N62, D64, H66, E71, D98, D100, N102, R104, E109, D134, D136, D138, H140, E145, D178, N180, D182, S184, E189, D213, N215, D217, R219, E224, D245, D247, N249, K251, E256, D284, D286, Y288, and E293.

Aboral ectoderm, a squamous epithelium covering the surface of the late stage embryo and larva.

Calcium-binding protein involved in larval development and metamorphosis. Likely to function as calcium buffers mediating the transport of calcium from the sea water to the blastocoel where calcium is required for skeleton formation. The protein is Calcium-binding protein LPS1-alpha of Lytechinus pictus (Painted sea urchin).